Consider the following 1709-residue polypeptide: Acrosomal protein KIAA1210 (1709 aa).

Disordered stretches follow at residues Pro-207–Ala-226, Pro-239–Pro-275, Pro-451–Thr-663, Pro-763–Glu-973, Leu-1211–Ala-1382, Thr-1408–His-1516, Ala-1539–Tyr-1571, and Phe-1589–Gly-1653. Over residues Pro-257–Ser-272 the composition is skewed to basic residues. Basic and acidic residues predominate over residues Glu-473–Gly-490. Polar residues-rich tracts occupy residues Ala-494 to Thr-505 and Asp-514 to Tyr-527. The span at Glu-595–Gln-608 shows a compositional bias: low complexity. Over residues Pro-651–Thr-663 the composition is skewed to basic and acidic residues. Positions Glu-777–Glu-794 are enriched in acidic residues. Composition is skewed to polar residues over residues Lys-886–Ser-941, Phe-1288–Gln-1299, His-1332–Gly-1350, Pro-1366–His-1376, and Asp-1457–Gln-1469. A compositionally biased stretch (low complexity) spans Ser-1502–Gly-1513. Over residues Gln-1542–Ala-1552 the composition is skewed to basic and acidic residues.

Interacts with TOP2B.

The protein localises to the cytoplasmic vesicle. The protein resides in the secretory vesicle. It localises to the acrosome. This Homo sapiens (Human) protein is Acrosomal protein KIAA1210.